The sequence spans 565 residues: Probable beta-glucosidase btgE (565 aa).

The first 18 residues, 1-18, serve as a signal peptide directing secretion; that stretch reads MRGAILATAAALAGTAMA. A disordered region spans residues 246 to 304; that stretch reads TGQDEPTSAPAAPSTTAVPATTTAAPETTTAAPDTTTAVPSTSSAAPSSSSTAPASTGA. Low complexity predominate over residues 251 to 304; sequence PTSAPAAPSTTAVPATTTAAPETTTAAPDTTTAVPSTSSAAPSSSSTAPASTGA. Residue glutamate 405 is the Proton donor of the active site. Residue glutamate 501 is the Nucleophile of the active site.

The protein belongs to the glycosyl hydrolase 17 family.

The protein resides in the secreted. The protein localises to the cell wall. The enzyme catalyses Hydrolysis of terminal, non-reducing beta-D-glucosyl residues with release of beta-D-glucose.. It functions in the pathway glycan metabolism; cellulose degradation. Beta-glucosidases are one of a number of cellulolytic enzymes involved in the degradation of cellulosic biomass. Catalyzes the last step releasing glucose from the inhibitory cellobiose. In Aspergillus fumigatus (strain CBS 144.89 / FGSC A1163 / CEA10) (Neosartorya fumigata), this protein is Probable beta-glucosidase btgE (btgE).